A 262-amino-acid polypeptide reads, in one-letter code: Indole-3-glycerol phosphate synthase (262 aa).

It belongs to the TrpC family.

It carries out the reaction 1-(2-carboxyphenylamino)-1-deoxy-D-ribulose 5-phosphate + H(+) = (1S,2R)-1-C-(indol-3-yl)glycerol 3-phosphate + CO2 + H2O. Its pathway is amino-acid biosynthesis; L-tryptophan biosynthesis; L-tryptophan from chorismate: step 4/5. The chain is Indole-3-glycerol phosphate synthase from Clostridium kluyveri (strain NBRC 12016).